The chain runs to 159 residues: 3-hydroxyacyl-[acyl-carrier-protein] dehydratase FabZ (159 aa).

His-58 is a catalytic residue.

Belongs to the thioester dehydratase family. FabZ subfamily.

The protein resides in the cytoplasm. The enzyme catalyses a (3R)-hydroxyacyl-[ACP] = a (2E)-enoyl-[ACP] + H2O. Involved in unsaturated fatty acids biosynthesis. Catalyzes the dehydration of short chain beta-hydroxyacyl-ACPs and long chain saturated and unsaturated beta-hydroxyacyl-ACPs. The polypeptide is 3-hydroxyacyl-[acyl-carrier-protein] dehydratase FabZ (Helicobacter pylori (strain G27)).